Here is a 1335-residue protein sequence, read N- to C-terminus: Restriction of telomere capping protein 1 (1335 aa).

The disordered stretch occupies residues 1–39; that stretch reads MSLSPHVENASIPKGSTPIPKNRNVSSIGKGEFLGSSSS. WD repeat units lie at residues 207-248, 256-296, 305-342, 367-406, 439-486, and 489-527; these read NKFS…SIDN, EHTR…SKSS, TASDSIRDVKWMPGYNFASKNDQGSSTYGNLKSGYKFA, AHTGPGLCLNWHPNQEYIATGGRDGKCCLWFVGDNANAAE, NTGY…IPKH, and LSETPSLGLVWWDENLIFNIDKGTRINGWDINKEPTVLE. Disordered stretches follow at residues 559–593, 600–619, 630–651, 736–758, and 783–824; these read PELQPTSSTTCKKHPGTIKNPKNGNPENQGIIGGI, TGLTSFTPERPPTLKAGPTF, ASSFNSSSASLTSLTPQTENRE, KNATETHGDNTTTTNNNDDDDDD, and NEKV…DRSR. A compositionally biased stretch (low complexity) spans 630-644; the sequence is ASSFNSSSASLTSLT. Over residues 808–817 the composition is skewed to low complexity; that stretch reads SSISSISASR. The WD 7 repeat unit spans residues 844-884; the sequence is LISIATHNASVYLSIDDLTNFKIWILIRDSLLWDLKWMTSS. 2 disordered regions span residues 935–956 and 1007–1037; these read AFRANSDEPSDAEKKPVSKLKE and DEHEHQEEEQPHDSPTKSAQFHASPIAKSIP. Composition is skewed to basic and acidic residues over residues 945–956 and 1009–1021; these read DAEKKPVSKLKE and HEHQEEEQPHDSP. Residues Ser-1030, Ser-1074, Ser-1081, Ser-1083, Ser-1117, and Ser-1127 each carry the phosphoserine modification. 2 WD repeats span residues 1130–1170 and 1217–1256; these read REQL…TETG and VLKYCPFEDIMGSEGDQSSIRLFCERCGELITNESSKEKL. The RING-type; degenerate zinc-finger motif lies at 1294-1335; it reads LKKLTMVILPCGHEGHFQCIQEWFLDENEQECPGGCPGVAFI.

Belongs to the WD repeat RTC1 family.

The protein localises to the vacuole. May be involved in a process influencing telomere capping. This Saccharomyces cerevisiae (strain YJM789) (Baker's yeast) protein is Restriction of telomere capping protein 1 (RTC1).